Reading from the N-terminus, the 282-residue chain is Putative polysaccharide deacetylase YheN (282 aa).

A helical membrane pass occupies residues 15-35 (LAFKFASLAVLCVLLLLMVIL). Positions 85-271 (KTVYLTFDDG…KLKEKGYSFG (187 aa)) constitute a NodB homology domain.

Belongs to the polysaccharide deacetylase family.

Its subcellular location is the cell membrane. This is Putative polysaccharide deacetylase YheN (yheN) from Bacillus subtilis (strain 168).